We begin with the raw amino-acid sequence, 357 residues long: Chorismate synthase (357 aa).

Over residues 38-49 (EKDIQPDLDRRK) the composition is skewed to basic and acidic residues. The disordered stretch occupies residues 38–60 (EKDIQPDLDRRKPGTSRYTTPRR). The NADP(+) site is built by Arg48 and Arg54. FMN-binding positions include 125–127 (RSS), 243–244 (NA), Gly283, 298–302 (KPTSS), and Arg324.

It belongs to the chorismate synthase family. As to quaternary structure, homotetramer. Requires FMNH2 as cofactor.

It carries out the reaction 5-O-(1-carboxyvinyl)-3-phosphoshikimate = chorismate + phosphate. It functions in the pathway metabolic intermediate biosynthesis; chorismate biosynthesis; chorismate from D-erythrose 4-phosphate and phosphoenolpyruvate: step 7/7. Functionally, catalyzes the anti-1,4-elimination of the C-3 phosphate and the C-6 proR hydrogen from 5-enolpyruvylshikimate-3-phosphate (EPSP) to yield chorismate, which is the branch point compound that serves as the starting substrate for the three terminal pathways of aromatic amino acid biosynthesis. This reaction introduces a second double bond into the aromatic ring system. The chain is Chorismate synthase from Haemophilus influenzae (strain PittEE).